A 185-amino-acid chain; its full sequence is Ribosome-recycling factor (185 aa).

K162 bears the N6-acetyllysine mark.

The protein belongs to the RRF family.

It is found in the cytoplasm. In terms of biological role, responsible for the release of ribosomes from messenger RNA at the termination of protein biosynthesis. May increase the efficiency of translation by recycling ribosomes from one round of translation to another. The polypeptide is Ribosome-recycling factor (Shigella boydii serotype 18 (strain CDC 3083-94 / BS512)).